We begin with the raw amino-acid sequence, 436 residues long: UDP-N-acetylglucosamine 1-carboxyvinyltransferase 1 (436 aa).

Residue 22 to 23 (KN) coordinates phosphoenolpyruvate. R93 is a UDP-N-acetyl-alpha-D-glucosamine binding site. C117 functions as the Proton donor in the catalytic mechanism. The residue at position 117 (C117) is a 2-(S-cysteinyl)pyruvic acid O-phosphothioketal. UDP-N-acetyl-alpha-D-glucosamine-binding positions include 122 to 126 (RPIDQ), D306, and V328.

This sequence belongs to the EPSP synthase family. MurA subfamily.

Its subcellular location is the cytoplasm. The enzyme catalyses phosphoenolpyruvate + UDP-N-acetyl-alpha-D-glucosamine = UDP-N-acetyl-3-O-(1-carboxyvinyl)-alpha-D-glucosamine + phosphate. It functions in the pathway cell wall biogenesis; peptidoglycan biosynthesis. Cell wall formation. Adds enolpyruvyl to UDP-N-acetylglucosamine. The polypeptide is UDP-N-acetylglucosamine 1-carboxyvinyltransferase 1 (Bacillus licheniformis (strain ATCC 14580 / DSM 13 / JCM 2505 / CCUG 7422 / NBRC 12200 / NCIMB 9375 / NCTC 10341 / NRRL NRS-1264 / Gibson 46)).